A 402-amino-acid chain; its full sequence is Homoserine O-acetyltransferase (402 aa).

Over residues 1–17 the composition is skewed to polar residues; the sequence is MDWQTTSADTAPSSFIT. The disordered stretch occupies residues 1–39; that stretch reads MDWQTTSADTAPSSFITEEQDRSLFGKPPASGAWKESDP. The 311-residue stretch at 78 to 388 folds into the AB hydrolase-1 domain; that stretch reads NAVLVLHALT…HFGHDGFLIE (311 aa). The Nucleophile role is filled by Ser183. Arg255 is a binding site for substrate. Active-site residues include Asp349 and His382. Residue Asp383 coordinates substrate.

It belongs to the AB hydrolase superfamily. MetX family. Homodimer.

It localises to the cytoplasm. The catalysed reaction is L-homoserine + acetyl-CoA = O-acetyl-L-homoserine + CoA. It functions in the pathway amino-acid biosynthesis; L-methionine biosynthesis via de novo pathway; O-acetyl-L-homoserine from L-homoserine: step 1/1. In terms of biological role, transfers an acetyl group from acetyl-CoA to L-homoserine, forming acetyl-L-homoserine. In Leifsonia xyli subsp. xyli (strain CTCB07), this protein is Homoserine O-acetyltransferase.